The sequence spans 248 residues: Clathrin light chain A (248 aa).

Positions 1-93 (MAELDPFGAP…YQESNGPTDS (93 aa)) are disordered. Residues 13–25 (APGGPALGNGVAG) show a composition bias toward gly residues. The segment at 100–162 (VDRLQSEPES…QLQKTKASNR (63 aa)) is involved in binding clathrin heavy chain. Residues Ser105 and Ser206 each carry the phosphoserine modification. Lys223 carries the post-translational modification N6-acetyllysine. Ser236 carries the post-translational modification Phosphoserine. Position 242 is an N6-acetyllysine (Lys242).

Belongs to the clathrin light chain family. Clathrin coats are formed from molecules containing 3 heavy chains and 3 light chains. Interacts with CALY; the interaction stimulates clathrin self-assembly and clathrin-mediated endocytosis. Interacts with CKAP5 and TACC3 forming the TACC3/ch-TOG/clathrin complex located at spindle inter-microtubules bridges; the complex implicates clathrin triskelions.

It localises to the cytoplasmic vesicle membrane. Its subcellular location is the membrane. It is found in the coated pit. The protein resides in the cytoplasm. The protein localises to the cytoskeleton. It localises to the spindle. Its function is as follows. Clathrin is the major protein of the polyhedral coat of coated pits and vesicles. Acts as a component of the TACC3/ch-TOG/clathrin complex proposed to contribute to stabilization of kinetochore fibers of the mitotic spindle by acting as inter-microtubule bridge. The sequence is that of Clathrin light chain A (Clta) from Rattus norvegicus (Rat).